The following is a 131-amino-acid chain: Small ribosomal subunit protein uS8 (131 aa).

This sequence belongs to the universal ribosomal protein uS8 family. In terms of assembly, part of the 30S ribosomal subunit. Contacts proteins S5 and S12.

Its function is as follows. One of the primary rRNA binding proteins, it binds directly to 16S rRNA central domain where it helps coordinate assembly of the platform of the 30S subunit. In Clostridium novyi (strain NT), this protein is Small ribosomal subunit protein uS8.